Reading from the N-terminus, the 254-residue chain is MKMKVLVFFVATILVAWQCHAYDMFPLRMNTGYGARTPEVKCASWRLAVEAHNIFGFETIPEECVEATKEYIHGEQYRSDSKTVNQQAYFYARDLEVHPKDTFVFSIDGTVLSNIPYYKKHGYGVEKFNSTLYDEWVNKGNAPALPETLKNYNKLVSLGFKIIFLSGRTLDKQAVTEANLKKAGYHTWEKLILKDPQDPSTPNAVSYKTAAREKLIRQGYNIVGIIGDQWSDLLGGHRGESRTFKLPNPLYYIQ.

Positions 1–21 are cleaved as a signal peptide; it reads MKMKVLVFFVATILVAWQCHA. A propeptide spanning residues 22–34 is cleaved from the precursor; it reads YDMFPLRMNTGYG. N-linked (GlcNAc...) asparagine glycosylation occurs at Asn-129.

This sequence belongs to the APS1/VSP family. Accumulates in the stems of developing soybean seedlings.

May function as somatic storage protein during early seedling development. This Glycine max (Soybean) protein is Stem 28 kDa glycoprotein (VSPA).